The chain runs to 206 residues: Isochorismatase domain-containing protein 2A (206 aa).

N6-succinyllysine is present on Lys-26. Lys-93 and Lys-178 each carry N6-acetyllysine; alternate. Lys-93 and Lys-178 each carry N6-succinyllysine; alternate. N6-acetyllysine is present on residues Lys-182 and Lys-185.

This sequence belongs to the isochorismatase family. Interacts with CDKN2A. Ubiquitous. Expressed predominantly in uterus, stomach and urinary tract.

The protein resides in the cytoplasm. The protein localises to the nucleus. This chain is Isochorismatase domain-containing protein 2A, found in Mus musculus (Mouse).